The following is a 155-amino-acid chain: 3-hydroxyacyl-[acyl-carrier-protein] dehydratase FabZ (155 aa).

His-58 is an active-site residue.

It belongs to the thioester dehydratase family. FabZ subfamily.

Its subcellular location is the cytoplasm. It carries out the reaction a (3R)-hydroxyacyl-[ACP] = a (2E)-enoyl-[ACP] + H2O. Its function is as follows. Involved in unsaturated fatty acids biosynthesis. Catalyzes the dehydration of short chain beta-hydroxyacyl-ACPs and long chain saturated and unsaturated beta-hydroxyacyl-ACPs. The polypeptide is 3-hydroxyacyl-[acyl-carrier-protein] dehydratase FabZ (Rhizobium johnstonii (strain DSM 114642 / LMG 32736 / 3841) (Rhizobium leguminosarum bv. viciae)).